Consider the following 299-residue polypeptide: Tetrahydromethanopterin S-methyltransferase subunit E (299 aa).

Helical transmembrane passes span 57-77, 80-100, 133-153, 158-178, 226-246, and 262-282; these read AISG…TIAW, INAG…AAIV, IGPI…AAYL, LGNP…VGAI, YFCS…IIFL, and VTKT…AAVI.

It belongs to the MtrE family. In terms of assembly, the complex is composed of 8 subunits; MtrA, MtrB, MtrC, MtrD, MtrE, MtrF, MtrG and MtrH.

It is found in the cell membrane. The catalysed reaction is 5-methyl-5,6,7,8-tetrahydromethanopterin + coenzyme M + 2 Na(+)(in) = 5,6,7,8-tetrahydromethanopterin + methyl-coenzyme M + 2 Na(+)(out). It functions in the pathway one-carbon metabolism; methanogenesis from CO(2); methyl-coenzyme M from 5,10-methylene-5,6,7,8-tetrahydromethanopterin: step 2/2. Part of a complex that catalyzes the formation of methyl-coenzyme M and tetrahydromethanopterin from coenzyme M and methyl-tetrahydromethanopterin. This is an energy-conserving, sodium-ion translocating step. In Methanococcus maripaludis (strain C7 / ATCC BAA-1331), this protein is Tetrahydromethanopterin S-methyltransferase subunit E.